A 229-amino-acid polypeptide reads, in one-letter code: MNKYFKVFFFVLLTHALKSALIFGQATLQKGLSLDIDKDSKATDRLVVKHFDSDKQGYKAYTFKKEGWEYVNVKHVYFGERLLRVGRDQDMKCDYVHYVKVFWKGELAPFLIKMKYYNWAWVSTRLHFRLTPELTWAEVFVPTIDENSEEGYMKLFKKRMDDFVSQVGEDRLATYKPFTEDPSKKRFDLTPTDEKEDTNKKKYVLMVVVVVVFVVVASLVVFLVKFCLK.

A signal peptide spans Met-1–Ser-19. Residues Ala-20–Tyr-203 are Extracellular-facing. Residues Val-204–Val-224 form a helical membrane-spanning segment. The Cytoplasmic segment spans residues Lys-225–Lys-229.

The protein localises to the membrane. The polypeptide is 23 kDa piroplasm membrane protein (Theileria parva (East coast fever infection agent)).